The primary structure comprises 171 residues: Nicotinamide-nucleotide adenylyltransferase (171 aa).

Belongs to the archaeal NMN adenylyltransferase family.

The protein localises to the cytoplasm. The catalysed reaction is beta-nicotinamide D-ribonucleotide + ATP + H(+) = diphosphate + NAD(+). It functions in the pathway cofactor biosynthesis; NAD(+) biosynthesis; NAD(+) from nicotinamide D-ribonucleotide: step 1/1. The protein is Nicotinamide-nucleotide adenylyltransferase of Methanococcus maripaludis (strain C6 / ATCC BAA-1332).